The sequence spans 360 residues: POU domain, class 5, transcription factor 1 (360 aa).

2 disordered regions span residues 1–52 (MAGH…PGVG) and 88–114 (GGLETSQPEGEAGVGVESNSDGASPEP). Positions 4-12 (HLASDFAFS) match the 9aaTAD motif. At Ser-111 the chain carries Phosphoserine; by MAPK. A Glycyl lysine isopeptide (Lys-Gly) (interchain with G-Cter in SUMO) cross-link involves residue Lys-123. Residues 138–212 (DIKALQKELE…LLQKWVEEAD (75 aa)) form the POU-specific domain. Residues Arg-157 and Gln-164 each coordinate DNA. DNA-binding regions lie at residues 180–186 (SQTTICR) and 193–196 (SFKN). Residues 230–289 (RKRKRTSIENRVRGNLENLFLQCPKPTLQQISHIAQQLGLEKDVVRVWFCNRRQKGKRSS) constitute a DNA-binding region (homeobox). A Phosphothreonine modification is found at Thr-235. A phosphoserine mark is found at Ser-236, Ser-289, Ser-290, and Ser-355.

Belongs to the POU transcription factor family. Class-5 subfamily. In terms of assembly, interacts with PKM. Interacts with WWP2. Interacts with UBE2I and ZSCAN10. Interacts with PCGF1. Interacts with ESRRB; recruits ESRRB near the POU5F1-SOX2 element in the NANOG proximal promoter; the interaction is DNA independent. Interacts with ZNF322. Interacts with MAPK8 and MAPK9; the interaction allows MAPK8 and MAPK9 to phosphorylate POU5F1 on Ser-355. Interacts (when phosphorylated on Ser-355) with FBXW8. Interacts with FBXW4. Interacts with SOX2 and SOX15; binds synergistically with either SOX2 or SOX15 to DNA. Interacts with DDX56. Sumoylation enhances the protein stability, DNA binding and transactivation activity. Sumoylation is required for enhanced YES1 expression. In terms of processing, ubiquitinated; undergoes 'Lys-63'-linked polyubiquitination by WWP2 leading to proteasomal degradation. Post-translationally, ERK1/2-mediated phosphorylation at Ser-111 promotes nuclear exclusion and proteasomal degradation. Phosphorylation at Thr-235 and Ser-236 decrease DNA-binding and alters ability to activate transcription. In terms of tissue distribution, expressed in developing brain. Highest levels found in specific cell layers of the cortex, the olfactory bulb, the hippocampus and the cerebellum. Low levels of expression in adult tissues.

Its subcellular location is the cytoplasm. It localises to the nucleus. Its function is as follows. Transcription factor that binds to the octamer motif (5'-ATTTGCAT-3'). Forms a trimeric complex with SOX2 or SOX15 on DNA and controls the expression of a number of genes involved in embryonic development such as YES1, FGF4, UTF1 and ZFP206. Critical for early embryogenesis and for embryonic stem cell pluripotency. The protein is POU domain, class 5, transcription factor 1 (POU5F1) of Homo sapiens (Human).